The sequence spans 101 residues: Small ribosomal subunit protein uS10 (101 aa).

It belongs to the universal ribosomal protein uS10 family. As to quaternary structure, part of the 30S ribosomal subunit.

Its function is as follows. Involved in the binding of tRNA to the ribosomes. The polypeptide is Small ribosomal subunit protein uS10 (Porphyromonas gingivalis (strain ATCC 33277 / DSM 20709 / CIP 103683 / JCM 12257 / NCTC 11834 / 2561)).